The sequence spans 317 residues: sn-1-specific diacylglycerol lipase ABHD11 (317 aa).

Residues 1-20 (MSNFAMSALCRVFTRGAPCG) constitute a mitochondrion transit peptide. Residues 69-304 (PLVFLHGLFG…ASHWIHADKP (236 aa)) form the AB hydrolase-1 domain. Residues Ser-142, Glu-238, and His-297 each act as charge relay system in the active site.

It belongs to the AB hydrolase superfamily. Post-translationally, phosphorylated.

The protein resides in the mitochondrion. It is found in the mitochondrion matrix. The catalysed reaction is 1-octadecanoyl-2-(5Z,8Z,11Z,14Z-eicosatetraenoyl)-sn-glycerol + H2O = 2-(5Z,8Z,11Z,14Z-eicosatetraenoyl)-glycerol + octadecanoate + H(+). It catalyses the reaction a 1,2-diacyl-sn-glycerol + H2O = a 2-acylglycerol + a fatty acid + H(+). It carries out the reaction a 1,3-diacyl-sn-glycerol + H2O = a 1-acyl-sn-glycerol + a fatty acid + H(+). The enzyme catalyses 1-octadecanoyl-2-(9Z-octadecenoyl)-sn-glycerol + H2O = 2-(9Z-octadecenoyl)-glycerol + octadecanoate + H(+). The catalysed reaction is 1-octadecanoyl-2-(4Z,7Z,10Z,13Z,16Z,19Z-docosahexaenoyl)-sn-glycerol + H2O = 2-(4Z,7Z,10Z,13Z,16Z,19Z-docosahexaenoyl)-glycerol + octadecanoate + H(+). It catalyses the reaction 1,2-didecanoylglycerol + H2O = decanoylglycerol + decanoate + H(+). In terms of biological role, catalyzes the hydrolysis of diacylglycerol in vitro and may function as a key regulator in lipid metabolism, namely by regulating the intracellular levels of diacylglycerol. 1,2-diacyl-sn-glycerols are the preferred substrate over 1,3-diacyl-sn-glycerols. The enzyme hydrolyzes stearate in preference to palmitate from the sn-1 position of 1,2-diacyl-sn-glycerols. In Danio rerio (Zebrafish), this protein is sn-1-specific diacylglycerol lipase ABHD11.